The primary structure comprises 307 residues: Small ribosomal subunit biogenesis GTPase RsgA (307 aa).

The disordered stretch occupies residues 1 to 21; it reads MPSEHPFSDGISTPNPKETMN. Residues 10–21 are compositionally biased toward polar residues; it reads GISTPNPKETMN. The CP-type G domain occupies 85 to 242; that stretch reads RQDAWKTKLI…LIDSPGLQEF (158 aa). GTP contacts are provided by residues 135-138 and 184-192; these read NKAD and GQSGMGKST. The Zn(2+) site is built by Cys-266, Cys-271, His-273, and Cys-279.

It belongs to the TRAFAC class YlqF/YawG GTPase family. RsgA subfamily. As to quaternary structure, monomer. Associates with 30S ribosomal subunit, binds 16S rRNA. It depends on Zn(2+) as a cofactor.

The protein resides in the cytoplasm. In terms of biological role, one of several proteins that assist in the late maturation steps of the functional core of the 30S ribosomal subunit. Helps release RbfA from mature subunits. May play a role in the assembly of ribosomal proteins into the subunit. Circularly permuted GTPase that catalyzes slow GTP hydrolysis, GTPase activity is stimulated by the 30S ribosomal subunit. The protein is Small ribosomal subunit biogenesis GTPase RsgA of Neisseria gonorrhoeae (strain NCCP11945).